Consider the following 350-residue polypeptide: N(4)-bis(aminopropyl)spermidine synthase (350 aa).

It belongs to the branched-chain polyamine synthase family.

Its subcellular location is the cytoplasm. It catalyses the reaction 2 S-adenosyl 3-(methylsulfanyl)propylamine + spermidine = N(4)-bis(aminopropyl)spermidine + 2 S-methyl-5'-thioadenosine + 2 H(+). It functions in the pathway amine and polyamine biosynthesis. In terms of biological role, involved in the biosynthesis of branched-chain polyamines, which support the growth of thermophiles under high-temperature conditions. Catalyzes the sequential condensation of spermidine with the aminopropyl groups of decarboxylated S-adenosylmethionines to produce N(4)-bis(aminopropyl)spermidine via N(4)-aminopropylspermidine. This is N(4)-bis(aminopropyl)spermidine synthase from Methanocaldococcus jannaschii (strain ATCC 43067 / DSM 2661 / JAL-1 / JCM 10045 / NBRC 100440) (Methanococcus jannaschii).